We begin with the raw amino-acid sequence, 74 residues long: Defensin J1-2 (74 aa).

An N-terminal signal peptide occupies residues 1-27 (MAGFSKVIATIFLMMMLVFATGMVAEA). 4 disulfides stabilise this stretch: Cys-30/Cys-74, Cys-41/Cys-61, Cys-47/Cys-68, and Cys-51/Cys-70.

This sequence belongs to the DEFL family. As to quaternary structure, monomer. As to expression, expressed in flowers and in young fruits.

It localises to the secreted. Its function is as follows. Plant defense peptide with antifungal activity against F.oxysporum and B.cinerea. This Capsicum annuum (Capsicum pepper) protein is Defensin J1-2.